We begin with the raw amino-acid sequence, 227 residues long: Aspartyl protease inhibitor (227 aa).

The first 15 residues, 1-15 (MKLVVLCVLCGIALA), serve as a signal peptide directing secretion. The segment covering 88-109 (SLKSRMAGKKEKAVTPKEEDLP) has biased composition (basic and acidic residues). The segment at 88 to 116 (SLKSRMAGKKEKAVTPKEEDLPKAPQKPS) is disordered. Cysteines 131 and 223 form a disulfide.

The protein belongs to the protease inhibitor I33 family.

It localises to the secreted. Functionally, aspartyl protease inhibitor. The chain is Aspartyl protease inhibitor (API) from Ostertagia ostertagi (Brown stomach worm).